The chain runs to 223 residues: MDRLKLEGVGMTSKRTRDRLVERLLEQGVTSQFVLELIANTPRHLFLDEALSHRAYEDASLPIGFGQTLSQPYIVARMTEILLGAAGDPKRVLEIGTGSGYQTCILAQAVEHVWSVERIKPLQDKAKQRLRHLGLNNVTYKHADGGFGWPEQGPFDAILSAAAPRDIPKSLLQQLAHNGVLVIPVGADEQVLTLVIRDGEEDKFITQKLEPVKFVPLLSGVTR.

Ser-70 is an active-site residue.

This sequence belongs to the methyltransferase superfamily. L-isoaspartyl/D-aspartyl protein methyltransferase family.

The protein localises to the cytoplasm. It catalyses the reaction [protein]-L-isoaspartate + S-adenosyl-L-methionine = [protein]-L-isoaspartate alpha-methyl ester + S-adenosyl-L-homocysteine. Catalyzes the methyl esterification of L-isoaspartyl residues in peptides and proteins that result from spontaneous decomposition of normal L-aspartyl and L-asparaginyl residues. It plays a role in the repair and/or degradation of damaged proteins. The sequence is that of Protein-L-isoaspartate O-methyltransferase from Saccharophagus degradans (strain 2-40 / ATCC 43961 / DSM 17024).